The following is a 303-amino-acid chain: Pseudouridine-5'-phosphate glycosidase (303 aa).

E25 serves as the catalytic Proton donor. Substrate-binding residues include K87 and V107. Residue D139 participates in Mn(2+) binding. Residue 141 to 143 (SAD) coordinates substrate. The Nucleophile role is filled by K160.

This sequence belongs to the pseudouridine-5'-phosphate glycosidase family. As to quaternary structure, homotrimer. Mn(2+) serves as cofactor.

It catalyses the reaction D-ribose 5-phosphate + uracil = psi-UMP + H2O. Its function is as follows. Catalyzes the reversible cleavage of pseudouridine 5'-phosphate (PsiMP) to ribose 5-phosphate and uracil. Functions biologically in the cleavage direction, as part of a pseudouridine degradation pathway. The chain is Pseudouridine-5'-phosphate glycosidase from Hahella chejuensis (strain KCTC 2396).